A 264-amino-acid polypeptide reads, in one-letter code: Membrane-spanning 4-domains subfamily A member 10 (264 aa).

Residues 1 to 57 (MKAEATVIPSRCARGQTTAAPGVQPWQTSVPQNTTQPKLLAPRQHEKSQKRSSLLKE) are Cytoplasmic-facing. Residues 17 to 37 (TTAAPGVQPWQTSVPQNTTQP) are compositionally biased toward polar residues. Positions 17–48 (TTAAPGVQPWQTSVPQNTTQPKLLAPRQHEKS) are disordered. The chain crosses the membrane as a helical span at residues 58 to 78 (LGAFHITIALLHLVFGGYLAS). Residues 79–89 (TVKSLHLVVLK) lie on the Extracellular side of the membrane. The helical transmembrane segment at 90–110 (SWYPFWGAASFLISGILAITM) threads the bilayer. The Cytoplasmic portion of the chain corresponds to 111–119 (KTFSKTYLK). The chain crosses the membrane as a helical span at residues 120–140 (MLCLMTNLVSLFCVLSGLFVI). At 141–169 (SKDLFLESPFESPIWRMYPNSTVHIQRLE) the chain is on the extracellular side. A helical transmembrane segment spans residues 170–190 (LALLCFTVLELFLPVPTAVTA). Over 191–264 (WRDRPSAKND…GAGIWTQTAN (74 aa)) the chain is Cytoplasmic.

The protein belongs to the MS4A family.

The protein localises to the membrane. Its function is as follows. May be involved in signal transduction as a component of a multimeric receptor complex. The sequence is that of Membrane-spanning 4-domains subfamily A member 10 (MS4A10) from Pongo abelii (Sumatran orangutan).